An 85-amino-acid chain; its full sequence is Alpha-defensin 11 (85 aa).

Positions A1–A11 are cleaved as a signal peptide. Positions D12–S50 are excised as a propeptide. The interval I14–L46 is disordered. Cystine bridges form between C56/C84, C58/C73, and C63/C83.

This sequence belongs to the alpha-defensin family. As to expression, paneth cells of the small bowel.

The protein resides in the secreted. Functionally, probably contributes to the antimicrobial barrier function of the small bowel mucosa. This chain is Alpha-defensin 11 (Defa11), found in Mus musculus (Mouse).